The sequence spans 338 residues: Tetraacyldisaccharide 4'-kinase (338 aa).

ATP is bound at residue 51 to 58; it reads HLGGAGKT.

Belongs to the LpxK family.

It catalyses the reaction a lipid A disaccharide + ATP = a lipid IVA + ADP + H(+). The protein operates within glycolipid biosynthesis; lipid IV(A) biosynthesis; lipid IV(A) from (3R)-3-hydroxytetradecanoyl-[acyl-carrier-protein] and UDP-N-acetyl-alpha-D-glucosamine: step 6/6. In terms of biological role, transfers the gamma-phosphate of ATP to the 4'-position of a tetraacyldisaccharide 1-phosphate intermediate (termed DS-1-P) to form tetraacyldisaccharide 1,4'-bis-phosphate (lipid IVA). This is Tetraacyldisaccharide 4'-kinase from Rhodopseudomonas palustris (strain HaA2).